A 276-amino-acid chain; its full sequence is Bis(5'-nucleosyl)-tetraphosphatase, symmetrical (276 aa).

This sequence belongs to the Ap4A hydrolase family.

The enzyme catalyses P(1),P(4)-bis(5'-adenosyl) tetraphosphate + H2O = 2 ADP + 2 H(+). In terms of biological role, hydrolyzes diadenosine 5',5'''-P1,P4-tetraphosphate to yield ADP. The protein is Bis(5'-nucleosyl)-tetraphosphatase, symmetrical of Mannheimia succiniciproducens (strain KCTC 0769BP / MBEL55E).